Reading from the N-terminus, the 372-residue chain is Spermidine/putrescine import ATP-binding protein PotA (372 aa).

Residues 11-241 (IELRSIKKSY…PANLFVARFI (231 aa)) form the ABC transporter domain. 43 to 50 (GPSGCGKT) lines the ATP pocket.

The protein belongs to the ABC transporter superfamily. Spermidine/putrescine importer (TC 3.A.1.11.1) family. In terms of assembly, the complex is composed of two ATP-binding proteins (PotA), two transmembrane proteins (PotB and PotC) and a solute-binding protein (PotD).

The protein localises to the cell inner membrane. The catalysed reaction is ATP + H2O + polyamine-[polyamine-binding protein]Side 1 = ADP + phosphate + polyamineSide 2 + [polyamine-binding protein]Side 1.. Part of the ABC transporter complex PotABCD involved in spermidine/putrescine import. Responsible for energy coupling to the transport system. The chain is Spermidine/putrescine import ATP-binding protein PotA from Haemophilus influenzae (strain ATCC 51907 / DSM 11121 / KW20 / Rd).